A 59-amino-acid chain; its full sequence is MAFDKKLLDIVACPVCKGKLEYDKMTQQLICKADKLAYPITEGIPVLLENRAVPLTESV.

Belongs to the UPF0434 family.

The polypeptide is UPF0434 protein Shew185_1670 (Shewanella baltica (strain OS185)).